A 506-amino-acid chain; its full sequence is ATP synthase subunit alpha (506 aa).

An ATP-binding site is contributed by 171-178 (GDRQTGKT).

The protein belongs to the ATPase alpha/beta chains family. As to quaternary structure, F-type ATPases have 2 components, CF(1) - the catalytic core - and CF(0) - the membrane proton channel. CF(1) has five subunits: alpha(3), beta(3), gamma(1), delta(1), epsilon(1). CF(0) has four main subunits: a, b, b' and c.

It is found in the cellular thylakoid membrane. The catalysed reaction is ATP + H2O + 4 H(+)(in) = ADP + phosphate + 5 H(+)(out). Produces ATP from ADP in the presence of a proton gradient across the membrane. The alpha chain is a regulatory subunit. This chain is ATP synthase subunit alpha, found in Nostoc punctiforme (strain ATCC 29133 / PCC 73102).